The primary structure comprises 81 residues: Cytotoxin 1b (81 aa).

The first 21 residues, 1–21 (MKTLLLTLVVVTIVCLDLGYT), serve as a signal peptide directing secretion. Disulfide bonds link cysteine 24–cysteine 42, cysteine 35–cysteine 59, cysteine 63–cysteine 74, and cysteine 75–cysteine 80.

Belongs to the three-finger toxin family. Short-chain subfamily. Type IA cytotoxin sub-subfamily. In terms of assembly, monomer in solution; Homodimer and oligomer in the presence of negatively charged lipids forming a pore with a size ranging between 20 and 30 Angstroms. In terms of tissue distribution, expressed by the venom gland.

It localises to the secreted. The protein resides in the target cell membrane. Shows cytolytic activity on many different cells by forming pore in lipid membranes. In vivo, increases heart rate or kills the animal by cardiac arrest. In addition, it binds to heparin with high affinity, interacts with Kv channel-interacting protein 1 (KCNIP1) in a calcium-independent manner, and binds to integrin alpha-V/beta-3 (ITGAV/ITGB3) with moderate affinity. This chain is Cytotoxin 1b, found in Naja atra (Chinese cobra).